The chain runs to 376 residues: N-acetyldiaminopimelate deacetylase (376 aa).

D69 is a catalytic residue. Catalysis depends on E128, which acts as the Proton acceptor.

This sequence belongs to the peptidase M20A family. N-acetyldiaminopimelate deacetylase subfamily.

The catalysed reaction is N-acetyl-(2S,6S)-2,6-diaminopimelate + H2O = (2S,6S)-2,6-diaminopimelate + acetate. Its pathway is amino-acid biosynthesis; L-lysine biosynthesis via DAP pathway; LL-2,6-diaminopimelate from (S)-tetrahydrodipicolinate (acetylase route): step 3/3. In terms of biological role, catalyzes the conversion of N-acetyl-diaminopimelate to diaminopimelate and acetate. This Streptococcus pneumoniae (strain 70585) protein is N-acetyldiaminopimelate deacetylase.